Reading from the N-terminus, the 130-residue chain is MHLRLLMSTVITATLIVSNNALTSPSDKTKTRALRGASTVGIAADNLLAAHFSPTLKHKESRGDYNNIQTERHRKRRLYDAPHHPEFYDIAVHQVPSDKSYGGGPAIAIFAGVAATFILIDYLIRHFTEN.

Positions 1–21 (MHLRLLMSTVITATLIVSNNA) are cleaved as a signal peptide. The RxLR-dEER motif lies at 32–62 (RALRGASTVGIAADNLLAAHFSPTLKHKESR). Residues 104–124 (GPAIAIFAGVAATFILIDYLI) form a helical membrane-spanning segment.

The protein belongs to the RxLR effector family.

Its subcellular location is the secreted. It is found in the host cytoplasm. The protein resides in the host nucleus. It localises to the membrane. In terms of biological role, effector that acts as a broad suppressor of cell death to interrupt plant immunity. Inhibits cell death induced by cell death-inducing proteins, including the PAMP elicitor INF1 from P.infestans. The sequence is that of Secreted RxLR effector protein 66 from Plasmopara viticola (Downy mildew of grapevine).